The sequence spans 121 residues: Protein TusC (121 aa).

Belongs to the DsrF/TusC family. In terms of assembly, heterohexamer, formed by a dimer of trimers. The hexameric TusBCD complex contains 2 copies each of TusB, TusC and TusD. The TusBCD complex interacts with TusE.

The protein resides in the cytoplasm. Functionally, part of a sulfur-relay system required for 2-thiolation of 5-methylaminomethyl-2-thiouridine (mnm(5)s(2)U) at tRNA wobble positions. The sequence is that of Protein TusC from Yersinia enterocolitica serotype O:8 / biotype 1B (strain NCTC 13174 / 8081).